Reading from the N-terminus, the 359-residue chain is Molybdenum import ATP-binding protein ModC (359 aa).

The 236-residue stretch at 1–236 folds into the ABC transporter domain; the sequence is MNTEIKARFR…IDLPAAFADD (236 aa). 34–41 is an ATP binding site; it reads GHSGSGKT. Residues 294–359 enclose the Mop domain; sequence QSSILNCVSA…AQIKAVALLA (66 aa).

It belongs to the ABC transporter superfamily. Molybdate importer (TC 3.A.1.8) family. As to quaternary structure, the complex is composed of two ATP-binding proteins (ModC), two transmembrane proteins (ModB) and a solute-binding protein (ModA).

The protein resides in the cell inner membrane. It catalyses the reaction molybdate(out) + ATP + H2O = molybdate(in) + ADP + phosphate + H(+). Part of the ABC transporter complex ModABC involved in molybdenum import. Responsible for energy coupling to the transport system. This chain is Molybdenum import ATP-binding protein ModC, found in Dechloromonas aromatica (strain RCB).